A 428-amino-acid polypeptide reads, in one-letter code: MRVVVLGSGVVGVASAYYLARAGHEVTVIDREAGPALETSFANAGQISPGYAAPWAAPGVPLKAVKWMFEKHAPLAIRLDGTRFQLQWMWQMLRNCTADRYAVNKGRMVRLAEYSRDCLQALRADTGIQYEGRTGGTLQLFRTQQQLDGAAKDIAVLQEANVPFELLSPAELKNAEPALAAVSHKLTGGLRLPGDETGDCQLFTTRLAALAESLGVKFRYNTPIDALAIAGGRIAGVQCGSETVRADAYVVALGSYSTSFISNLMKIPVYPLKGYSITAPIVNDAAAPVSTVLDETYKIAITRFDQRIRVGGMAEIVGFDKNLRAARRETLEMCVNDLFPGGGDTSKATFWTGLRPMTPDGTPIVGRTPVSNLFLNTGHGTLGWTMSCGSGQLLADLISGKKPAIQADDLSVHRYLKDVAGQTRPAYA.

3 to 17 (VVVLGSGVVGVASAY) contributes to the FAD binding site.

The protein belongs to the DadA oxidoreductase family. FAD serves as cofactor.

The catalysed reaction is a D-alpha-amino acid + A + H2O = a 2-oxocarboxylate + AH2 + NH4(+). The protein operates within amino-acid degradation; D-alanine degradation; NH(3) and pyruvate from D-alanine: step 1/1. Functionally, oxidative deamination of D-amino acids. The polypeptide is D-amino acid dehydrogenase (Burkholderia ambifaria (strain MC40-6)).